The chain runs to 124 residues: Protein ApaG (124 aa).

The ApaG domain maps to 1–124; it reads MSRYELTVQV…FALAMPRMLH (124 aa).

The protein is Protein ApaG of Ralstonia nicotianae (strain ATCC BAA-1114 / GMI1000) (Ralstonia solanacearum).